Reading from the N-terminus, the 2319-residue chain is Neurogenic locus notch homolog protein 3 (2319 aa).

Positions 1–14 (MGPGARGRRRRRRL) are enriched in basic residues. Residues 1–20 (MGPGARGRRRRRRLMALPPP) are disordered. An N-terminal signal peptide occupies residues 1 to 40 (MGPGARGRRRRRRLMALPPPPPPMRALPLLLLLLAGLGAA). 3 EGF-like domains span residues 41–79 (APPC…ERCQ), 80–120 (LEDP…PDCS), and 121–158 (LPDP…RNCR). The Extracellular portion of the chain corresponds to 41 to 1645 (APPCLDGSPC…LEPPEQSVPL (1605 aa)). 99 cysteine pairs are disulfide-bonded: Cys44-Cys56, Cys50-Cys67, Cys69-Cys78, Cys84-Cys95, Cys89-Cys108, Cys110-Cys119, Cys125-Cys136, Cys130-Cys146, Cys148-Cys157, Cys164-Cys176, Cys170-Cys185, Cys187-Cys196, Cys203-Cys214, Cys208-Cys224, Cys226-Cys235, Cys242-Cys253, Cys247-Cys262, Cys264-Cys273, Cys280-Cys293, Cys287-Cys302, Cys304-Cys313, Cys320-Cys331, Cys325-Cys340, Cys342-Cys351, Cys357-Cys368, Cys362-Cys379, Cys381-Cys390, Cys397-Cys410, Cys404-Cys419, Cys421-Cys430, Cys437-Cys448, Cys442-Cys457, Cys459-Cys468, Cys475-Cys486, Cys480-Cys495, Cys497-Cys506, Cys513-Cys524, Cys518-Cys533, Cys535-Cys544, Cys551-Cys561, Cys556-Cys570, Cys572-Cys581, Cys588-Cys599, Cys593-Cys608, Cys610-Cys619, Cys626-Cys636, Cys631-Cys645, Cys647-Cys656, Cys663-Cys674, Cys668-Cys683, Cys685-Cys694, Cys701-Cys711, Cys706-Cys720, Cys722-Cys731, Cys740-Cys751, Cys745-Cys760, Cys762-Cys771, Cys777-Cys788, Cys782-Cys798, Cys800-Cys809, Cys816-Cys828, Cys822-Cys837, Cys839-Cys848, Cys855-Cys866, Cys860-Cys875, Cys877-Cys886, Cys893-Cys903, Cys898-Cys912, Cys914-Cys923, Cys930-Cys941, Cys935-Cys950, Cys952-Cys961, Cys968-Cys979, Cys973-Cys988, Cys990-Cys999, Cys1006-Cys1017, Cys1011-Cys1024, Cys1026-Cys1035, Cys1042-Cys1063, Cys1057-Cys1072, Cys1074-Cys1083, Cys1090-Cys1101, Cys1095-Cys1110, Cys1112-Cys1121, Cys1128-Cys1139, Cys1133-Cys1148, Cys1150-Cys1159, Cys1166-Cys1184, Cys1178-Cys1193, Cys1195-Cys1204, Cys1211-Cys1224, Cys1216-Cys1234, Cys1236-Cys1245, Cys1252-Cys1263, Cys1257-Cys1277, Cys1279-Cys1288, Cys1295-Cys1306, Cys1300-Cys1315, and Cys1317-Cys1326. The EGF-like 4; calcium-binding domain occupies 160–197 (DIDECRAGASCRHGGTCINTPGSFHCLCPLGYTGLLCE). The EGF-like 5 domain occupies 199-236 (PIVPCAPSPCRNGGTCRQSSDVTYDCACLPGFEGQNCE). Residues 238–274 (NVDDCPGHRCLNGGTCVDGVNTYNCQCPPEWTGQFCT) enclose the EGF-like 6; calcium-binding domain. Residues 276–314 (DVDECQLQPNACHNGGTCFNLLGGHSCVCVNGWTGESCS) enclose the EGF-like 7 domain. An EGF-like 8; calcium-binding domain is found at 316–352 (NIDDCATAVCFHGATCHDRVASFYCACPMGKTGLLCH). The EGF-like 9 domain occupies 353-391 (LDDACVSNPCHEDAICDTNPVSGRAICTCPPGFTGGACD). One can recognise an EGF-like 10; calcium-binding domain in the interval 393–431 (DVDECSIGANPCEHLGRCVNTQGSFLCQCGRGYTGPRCE). Positions 433–469 (DVNECLSGPCRNQATCLDRIGQFTCICMAGFTGTFCE) constitute an EGF-like 11; calcium-binding domain. Residues 471–507 (DIDECQSSPCVNGGVCKDRVNGFSCTCPSGFSGSTCQ) enclose the EGF-like 12; calcium-binding domain. Residues 509–545 (DVDECASTPCRNGAKCVDQPDGYECRCAEGFEGTLCE) form the EGF-like 13; calcium-binding domain. An EGF-like 14; calcium-binding domain is found at 547 to 582 (NVDDCSPDPCHHGRCVDGIASFSCACAPGYTGIRCE). One can recognise an EGF-like 15; calcium-binding domain in the interval 584-620 (QVDECRSQPCRYGGKCLDLVDKYLCRCPPGTTGVNCE). The EGF-like 16; calcium-binding domain maps to 622–657 (NIDDCASNPCTFGVCRDGINRYDCVCQPGFTGPLCN). The region spanning 659–695 (EINECASSPCGEGGSCVDGENGFHCLCPPGSLPPLCL) is the EGF-like 17; calcium-binding domain. EGF-like domains follow at residues 697-732 (ANHP…PRCS), 736-772 (APDA…HQCE), and 773-810 (VLSP…PRCQ). The EGF-like 21; calcium-binding domain maps to 812 to 849 (DVDECAGASPCGPHGTCTNLPGSFRCICHGGYTGPFCD). An EGF-like 22; calcium-binding domain is found at 851-887 (DIDDCDPNPCLNGGSCQDGVGSFSCSCLSGFAGPRCA). Positions 889-924 (DVDECLSSPCGPGTCTDHVASFTCTCPPGYGGFHCE) constitute an EGF-like 23; calcium-binding domain. 5 EGF-like domains span residues 926-962 (DLLD…THCQ), 964-1000 (KVDP…NQCQ), 1002-1036 (PVDW…PLCD), 1038-1084 (PSLP…SHCE), and 1086-1122 (EVDP…DSCE). Residues 1124–1160 (DVDECASQPCQNGGSCIDLVAHYLCSCPPGTLGVLCE) enclose the EGF-like 29; calcium-binding domain. The 44-residue stretch at 1162–1205 (NEDDCGPGPSLDSGLRCLHNGTCVDLVGGFRCNCPPGYTGLHCE) folds into the EGF-like 30; calcium-binding domain. The N-linked (GlcNAc...) asparagine glycan is linked to Asn1181. EGF-like domains follow at residues 1207–1246 (DINE…PRCQ), 1248–1289 (ALFP…LRCE), 1291–1327 (VARS…PSCR), and 1337–1375 (TNTS…PRCE). An N-linked (GlcNAc...) asparagine glycan is attached at Asn1338. Disulfide bonds link Cys1341-Cys1352, Cys1346-Cys1363, Cys1365-Cys1374, Cys1389-Cys1412, Cys1394-Cys1407, Cys1403-Cys1419, Cys1430-Cys1453, Cys1435-Cys1448, Cys1444-Cys1460, Cys1469-Cys1495, Cys1477-Cys1490, and Cys1486-Cys1502. LNR repeat units lie at residues 1389–1429 (CPRA…PWRQ), 1430–1467 (CEAL…GRDR), and 1469–1507 (CNPV…SEVP). Asn1440 is a glycosylation site (N-linked (GlcNAc...) asparagine). A helical membrane pass occupies residues 1646-1666 (LPLLVAGAVFLLVIFVLGVMV). Residues 1667 to 2319 (ARRKREHSTL…EVTPKRQVMA (653 aa)) lie on the Cytoplasmic side of the membrane. ANK repeat units lie at residues 1840 to 1869 (TGET…DTNA), 1873 to 1903 (SGRT…DLDA), 1907 to 1936 (DGST…DVNA), 1940 to 1969 (LGKS…NKDM), and 1973 to 2002 (KEET…NREI). Disordered stretches follow at residues 2026–2046 (LDQP…PLLC) and 2059–2129 (QSGT…EGPY). The span at 2029-2046 (PSGPRSPSGPHGLGPLLC) shows a compositional bias: low complexity. At Arg2175 the chain carries Omega-N-methylarginine. A disordered region spans residues 2197–2319 (LNPATPVSPH…EVTPKRQVMA (123 aa)). The segment covering 2263 to 2288 (SLSDWSDSTPSPATATSATAAGALPA) has biased composition (low complexity). The span at 2297 to 2306 (SLPQSQTQLG) shows a compositional bias: polar residues.

Belongs to the NOTCH family. Heterodimer of a C-terminal fragment N(TM) and a N-terminal fragment N(EC) which are probably linked by disulfide bonds. Interacts with MAML1, MAML2 and MAML3 which act as transcriptional coactivators for NOTCH3. Interacts with PSMA1. Interacts with HIF1AN. Synthesized in the endoplasmic reticulum as an inactive form which is proteolytically cleaved by a furin-like convertase in the trans-Golgi network before it reaches the plasma membrane to yield an active, ligand-accessible form. Cleavage results in a C-terminal fragment N(TM) and a N-terminal fragment N(EC). Following ligand binding, it is cleaved by TNF-alpha converting enzyme (TACE) to yield a membrane-associated intermediate fragment called notch extracellular truncation (NEXT). This fragment is then cleaved by presenilin dependent gamma-secretase to release a notch-derived peptide containing the intracellular domain (NICD) from the membrane. Post-translationally, phosphorylated. In terms of processing, hydroxylated by HIF1AN. Expressed in postnatal central nervous system (CNS) germinal zones and, in early postnatal life, within numerous cells throughout the CNS. It is more highly localized to ventricular germinal zones.

The protein resides in the cell membrane. Its subcellular location is the nucleus. In terms of biological role, functions as a receptor for membrane-bound ligands Jagged1, Jagged2 and Delta1 to regulate cell-fate determination. Upon ligand activation through the released notch intracellular domain (NICD) it forms a transcriptional activator complex with RBPJ/RBPSUH and activates genes of the enhancer of split locus. Affects the implementation of differentiation, proliferation and apoptotic programs. Acts instructively to control the cell fate determination of CNS multipotent progenitor cells, resulting in astroglial induction and neuron/oligodendrocyte suppression. This is Neurogenic locus notch homolog protein 3 (Notch3) from Rattus norvegicus (Rat).